The sequence spans 521 residues: Importin subunit alpha-3 (521 aa).

A2 carries the post-translational modification N-acetylalanine. One can recognise an IBB domain in the interval 2–58 (ADNEKLDNQRLKNFKNKGRDLETMRRQRNEVVVELRKNKRDEHLLKRRNVPHEDICE). Positions 43 to 52 (EHLLKRRNVP) match the Nuclear localization signal motif. S60 is modified (phosphoserine). One copy of the ARM 1; truncated repeat lies at 66–106 (YRVQNTSLEAIVQNASSDNQGIQLSAVQAARKLLSSDRNPP). ARM repeat units lie at residues 107–149 (IDDL…TSEQ), 150–194 (TQAV…CRDY), 195–233 (VISLGVVKPLLSFISPSIPITFLRNVTWVMVNLCRHKDP), 234–278 (PPPM…EQIQ), 279–318 (MVIDSGIVPHLVPLLSHQEVKVQTAALRAVGNIVTGTDEQ), 319–360 (TQVV…NQQQ), 361–400 (VQAVIDANLVPMIIHLLDKGDFGTQKEAAWAISNLTISGR), and 401–443 (KDQV…KMAE). Residues 137 to 229 (WALTNIASGT…VTWVMVNLCR (93 aa)) are NLS binding site (major). Residues 306 to 394 (RAVGNIVTGT…QKEAAWAISN (89 aa)) are NLS binding site (minor). One copy of the ARM 10; atypical repeat lies at 447-485 (ETIGNLIEECGGLEKIEQLQNHENEDIYKLAYEIIDQFF).

This sequence belongs to the importin alpha family. As to quaternary structure, forms a complex with importin subunit beta-1 (KPNB1). Interacts with SNAI1. Interacts with TALDO1 isoform 1. Interacts with CYB1. In terms of assembly, (Microbial infection) Interacts with MERS virus protein OF4b; this interaction prevents the translocation of NF-kappa-B complex to the nucleus. (Microbial infection) Interacts with human adenovirus 5 E1A protein; this interaction allows E1A import into the host nucleus. As to quaternary structure, (Microbial infection) Interacts with Chikungunya virus capsid protein; this interaction allows the nuclear import of the viral capsid protein. In terms of tissue distribution, highly expressed in testis, ovary, small intestine, heart, skeletal muscle, lung and pancreas, but barely detectable in kidney, thymus, colon and peripheral blood leukocytes.

Its subcellular location is the cytoplasm. It is found in the nucleus. Its function is as follows. Functions in nuclear protein import as an adapter protein for nuclear receptor KPNB1. Binds specifically and directly to substrates containing either a simple or bipartite NLS motif. Docking of the importin/substrate complex to the nuclear pore complex (NPC) is mediated by KPNB1 through binding to nucleoporin FxFG repeats and the complex is subsequently translocated through the pore by an energy requiring, Ran-dependent mechanism. At the nucleoplasmic side of the NPC, Ran binds to importin-beta and the three components separate and importin-alpha and -beta are re-exported from the nucleus to the cytoplasm where GTP hydrolysis releases Ran from importin. The directionality of nuclear import is thought to be conferred by an asymmetric distribution of the GTP- and GDP-bound forms of Ran between the cytoplasm and nucleus. Mediates nuclear import of AARS1, MRTFA and RANBP3. In terms of biological role, (Microbial infection) In vitro, mediates the nuclear import of human cytomegalovirus UL84 by recognizing a non-classical NLS. In vitro, mediates the nuclear import of human cytomegalovirus UL84 by recognizing a non-classical NLS. The chain is Importin subunit alpha-3 from Homo sapiens (Human).